The chain runs to 398 residues: Selection and upkeep of intraepithelial T-cells protein 8 (398 aa).

The signal sequence occupies residues 1 to 25 (MMKPEFSHFFGFCVYFLFLQVMASS). An Ig-like V-type domain is found at 26–141 (EKLRVTTPTR…DVAIMNLNVT (116 aa)). Residues 26–244 (EKLRVTTPTR…ANELFNQDYL (219 aa)) are Extracellular-facing. Residues C49 and C123 are joined by a disulfide bond. N-linked (GlcNAc...) asparagine glycosylation is found at N92 and N139. The Ig-like C1-type domain occupies 142–233 (AVGLETEIHV…TGEEKQTSII (92 aa)). C163 and C217 are oxidised to a cystine. A helical membrane pass occupies residues 245–265 (WVGIFPFSVLSLILFGVLPFI). Topologically, residues 266–288 (NSFFRSQGCASGCLSKCLPVVTS) are cytoplasmic. Residues 289 to 309 (WPVQIVHFLVCSGVLFAVYLP) form a helical membrane-spanning segment. Residues 310–331 (HRYRVSLSDPQFPLYNNWITEL) are Extracellular-facing. A helical membrane pass occupies residues 332-352 (LIVILFLTICFVLPITVLLLI). The Cytoplasmic segment spans residues 353–398 (KLSPTCLAKWEKNKDDIMDSQLGLGKAREASTLYEEQSRKSWEQEK).

The protein belongs to the SKINT family. As to expression, expressed in skin, thymus, testis and, to a lower extent, bladder, brain, heart, kidney, mammary gland, small intestine and uterus.

The protein localises to the membrane. Its function is as follows. May act by engaging a cell surface molecule on immature T-cells in the embryonic thymus. In Mus musculus (Mouse), this protein is Selection and upkeep of intraepithelial T-cells protein 8 (Skint8).